The following is a 366-amino-acid chain: Cytochrome c mitochondrial import factor CYC2 (366 aa).

The transit peptide at 1-50 directs the protein to the mitochondrion; that stretch reads MLWKNYVLSSSRITRRLHKSPRKSSFSKNFFITGCLLTVGAVSSYLTYRY. Positions 63-184 constitute an FAD-binding FR-type domain; the sequence is SYFVKYKISH…RGPFIDYEFP (122 aa).

The cofactor is FAD.

Its subcellular location is the mitochondrion inner membrane. Functionally, redox component that participates in c-type cytochrome biogenesis in the mitochondrial intermembrane space. May play a role in the reduction of heme prior to its ligation to apocytochrome c by cytochrome c heme lyase. Has oxidoreductase activity in vitro. The protein is Cytochrome c mitochondrial import factor CYC2 (CYC2) of Saccharomyces cerevisiae (strain ATCC 204508 / S288c) (Baker's yeast).